We begin with the raw amino-acid sequence, 183 residues long: Heavy metal-associated isoprenylated plant protein 44 (183 aa).

Positions 50 to 113 (LQTVELKVRM…AVRRAGKRAE (64 aa)) constitute an HMA domain. A metal cation-binding residues include cysteine 61 and cysteine 64. Cysteine 180 is subject to Cysteine methyl ester. Residue cysteine 180 is the site of S-farnesyl cysteine attachment. Residues 181–183 (RLM) constitute a propeptide, removed in mature form.

It belongs to the HIPP family.

Heavy-metal-binding protein. This is Heavy metal-associated isoprenylated plant protein 44 from Arabidopsis thaliana (Mouse-ear cress).